The primary structure comprises 498 residues: Protein flp (498 aa).

Transmembrane regions (helical) follow at residues 6-26 (LYFLSISIIILVAISIAIYIT), 389-409 (FNIVTVLMTTLILLAFIFSAY), 433-453 (LSLCICIALALILYALPYLIL), and 471-491 (LALITTLIALFSTLIVILLFL).

It localises to the cell membrane. Its function is as follows. Its precise function is unknown. Has no penicillin-binding activity and is not involved in methicillin resistance. In Staphylococcus aureus (strain NCTC 8325 / PS 47), this protein is Protein flp (flp).